The chain runs to 180 residues: uncharacterized protein (180 aa).

This is an uncharacterized protein from Homo sapiens (Human).